Here is a 122-residue protein sequence, read N- to C-terminus: Ribosome-binding factor A (122 aa).

Belongs to the RbfA family. As to quaternary structure, monomer. Binds 30S ribosomal subunits, but not 50S ribosomal subunits or 70S ribosomes.

It is found in the cytoplasm. One of several proteins that assist in the late maturation steps of the functional core of the 30S ribosomal subunit. Associates with free 30S ribosomal subunits (but not with 30S subunits that are part of 70S ribosomes or polysomes). Required for efficient processing of 16S rRNA. May interact with the 5'-terminal helix region of 16S rRNA. In Halothermothrix orenii (strain H 168 / OCM 544 / DSM 9562), this protein is Ribosome-binding factor A.